The chain runs to 162 residues: Transcription elongation factor GreA (162 aa).

The stretch at 45–65 (NAEYHAAKERQLFIEARINEL) forms a coiled coil.

This sequence belongs to the GreA/GreB family.

Its function is as follows. Necessary for efficient RNA polymerase transcription elongation past template-encoded arresting sites. The arresting sites in DNA have the property of trapping a certain fraction of elongating RNA polymerases that pass through, resulting in locked ternary complexes. Cleavage of the nascent transcript by cleavage factors such as GreA or GreB allows the resumption of elongation from the new 3'terminus. GreA releases sequences of 2 to 3 nucleotides. The protein is Transcription elongation factor GreA of Wolinella succinogenes (strain ATCC 29543 / DSM 1740 / CCUG 13145 / JCM 31913 / LMG 7466 / NCTC 11488 / FDC 602W) (Vibrio succinogenes).